We begin with the raw amino-acid sequence, 399 residues long: Coiled-coil domain-containing protein 85C-B (399 aa).

Coiled-coil stretches lie at residues 52–84 (NRSLQVHLHEIRNLKEINQKLQDDNQELRELCC) and 113–144 (KEVSTYQQKLKELEINQENVLRENAELKDIIL). Residues 151–199 (NGAGSRSSIDSQSSLSNLNGGSGTVRDVGDGSSTSSGGSAGSPDHHHNH) are disordered. Residues 155-169 (SRSSIDSQSSLSNLN) are compositionally biased toward low complexity.

This sequence belongs to the CCDC85 family.

The protein resides in the cell junction. It localises to the tight junction. Its subcellular location is the adherens junction. May play a role in cell-cell adhesion and epithelium development through its interaction with proteins of the beta-catenin family. May play an important role in cortical development, especially in the maintenance of radial glia. This Danio rerio (Zebrafish) protein is Coiled-coil domain-containing protein 85C-B (ccdc85cb).